Reading from the N-terminus, the 377-residue chain is Chaperone protein DnaJ (377 aa).

The J domain maps to 5–69 (DYYEVLGISK…QKRAQYDQYG (65 aa)). The CR-type zinc finger occupies 134-216 (GKDAEIEIPR…CHGKGRVTKT (83 aa)). Positions 147, 150, 164, 167, 190, 193, 204, and 207 each coordinate Zn(2+). CXXCXGXG motif repeat units lie at residues 147 to 154 (CDTCHGSG), 164 to 171 (CSHCGGKG), 190 to 197 (CQYCNGTG), and 204 to 211 (CPTCHGKG).

The protein belongs to the DnaJ family. In terms of assembly, homodimer. Zn(2+) serves as cofactor.

It localises to the cytoplasm. Participates actively in the response to hyperosmotic and heat shock by preventing the aggregation of stress-denatured proteins and by disaggregating proteins, also in an autonomous, DnaK-independent fashion. Unfolded proteins bind initially to DnaJ; upon interaction with the DnaJ-bound protein, DnaK hydrolyzes its bound ATP, resulting in the formation of a stable complex. GrpE releases ADP from DnaK; ATP binding to DnaK triggers the release of the substrate protein, thus completing the reaction cycle. Several rounds of ATP-dependent interactions between DnaJ, DnaK and GrpE are required for fully efficient folding. Also involved, together with DnaK and GrpE, in the DNA replication of plasmids through activation of initiation proteins. This is Chaperone protein DnaJ from Listeria monocytogenes serotype 1/2a (strain 10403S).